The following is a 618-amino-acid chain: Citrolysin protein 1 (618 aa).

In terms of biological role, bacterial hemolysins are exotoxins that attack blood cell membranes and cause cell rupture by mechanisms not clearly defined. The polypeptide is Citrolysin protein 1 (Citrobacter freundii).